The sequence spans 510 residues: Internal alternative NAD(P)H-ubiquinone oxidoreductase A1, mitochondrial (510 aa).

The transit peptide at 1–48 (MLWIKNLARISQTTSSSVGNVFRNPESYTLSSRFCTALQKQQVTDTVQ) directs the protein to the mitochondrion. FAD is bound at residue 75–105 (RVLVLGSGWAGCRVLKGIDTSIYDVVCVSPR). Residue 242-278 (LHCVVVGGGPTGVEFSGELSDFIMKDVRQRYSHVKDD) participates in NAD(+) binding. A Microbody targeting signal motif is present at residues 501-510 (FVFGRDISRI).

Belongs to the NADH dehydrogenase family. It depends on FAD as a cofactor. As to expression, expressed in seedlings, cotyledons, young leaves, stems and flowers and, to a lower extent, in roots and buds.

It localises to the mitochondrion inner membrane. Its subcellular location is the peroxisome. It catalyses the reaction a quinone + NADH + H(+) = a quinol + NAD(+). The catalysed reaction is a ubiquinone + NADH + H(+) = a ubiquinol + NAD(+). Its function is as follows. Alternative NADH-ubiquinone oxidoreductase which catalyzes the oxidation of mitochondrial NADH does not translocate protons across the inner mitochondrial membrane. In Arabidopsis thaliana (Mouse-ear cress), this protein is Internal alternative NAD(P)H-ubiquinone oxidoreductase A1, mitochondrial (NDA1).